The primary structure comprises 225 residues: MPLPADLPPHERPRERLLRHGPASLRDAELLALALRTGTRGRTAIDMGSQLLHRYGGLRGLFAASPQELMSLPGLGAAKAGTLAAILELARRAAEERLMRQQAMSEPGSVKRYFKTALANCAVEHCLALYLDSQLNLITSGELARGTLARASVYPREVVREALRHHAAALILAHNHPSGSAQPSQADRDFTRHMQQALALVEIRLLDHLIVAGDTVVSMAELGLL.

The MPN domain maps to A103–L225. Positions 174, 176, and 187 each coordinate Zn(2+). The JAMM motif motif lies at H174 to D187.

It belongs to the UPF0758 family.

In Bordetella petrii (strain ATCC BAA-461 / DSM 12804 / CCUG 43448), this protein is UPF0758 protein Bpet3149.